Here is a 463-residue protein sequence, read N- to C-terminus: L-seryl-tRNA(Sec) selenium transferase (463 aa).

Lys-295 bears the N6-(pyridoxal phosphate)lysine mark.

It belongs to the SelA family. In terms of assembly, homodecamer; pentamer of dimers. Binds only one seryl-tRNA(Sec) per dimer. It depends on pyridoxal 5'-phosphate as a cofactor.

It is found in the cytoplasm. It catalyses the reaction L-seryl-tRNA(Sec) + selenophosphate + H(+) = L-selenocysteinyl-tRNA(Sec) + phosphate. Its pathway is aminoacyl-tRNA biosynthesis; selenocysteinyl-tRNA(Sec) biosynthesis; selenocysteinyl-tRNA(Sec) from L-seryl-tRNA(Sec) (bacterial route): step 1/1. Functionally, converts seryl-tRNA(Sec) to selenocysteinyl-tRNA(Sec) required for selenoprotein biosynthesis. The protein is L-seryl-tRNA(Sec) selenium transferase of Escherichia coli O45:K1 (strain S88 / ExPEC).